A 225-amino-acid polypeptide reads, in one-letter code: NAD(P)H-quinone oxidoreductase subunit K, chloroplastic (225 aa).

[4Fe-4S] cluster-binding residues include C43, C44, C108, and C139.

It belongs to the complex I 20 kDa subunit family. As to quaternary structure, NDH is composed of at least 16 different subunits, 5 of which are encoded in the nucleus. It depends on [4Fe-4S] cluster as a cofactor.

The protein resides in the plastid. Its subcellular location is the chloroplast thylakoid membrane. It catalyses the reaction a plastoquinone + NADH + (n+1) H(+)(in) = a plastoquinol + NAD(+) + n H(+)(out). It carries out the reaction a plastoquinone + NADPH + (n+1) H(+)(in) = a plastoquinol + NADP(+) + n H(+)(out). Functionally, NDH shuttles electrons from NAD(P)H:plastoquinone, via FMN and iron-sulfur (Fe-S) centers, to quinones in the photosynthetic chain and possibly in a chloroplast respiratory chain. The immediate electron acceptor for the enzyme in this species is believed to be plastoquinone. Couples the redox reaction to proton translocation, and thus conserves the redox energy in a proton gradient. The sequence is that of NAD(P)H-quinone oxidoreductase subunit K, chloroplastic from Guizotia abyssinica (Niger).